A 347-amino-acid polypeptide reads, in one-letter code: GMP reductase (347 aa).

108 to 131 (ADFEKTVQILALNPALNFVCIDVA) serves as a coordination point for NADP(+). G181 and G183 together coordinate K(+). C186 functions as the Thioimidate intermediate in the catalytic mechanism. 216–239 (IVSDGGCTMPGDVAKAFGGGADFV) lines the NADP(+) pocket.

It belongs to the IMPDH/GMPR family. GuaC type 1 subfamily. Homotetramer.

It carries out the reaction IMP + NH4(+) + NADP(+) = GMP + NADPH + 2 H(+). Functionally, catalyzes the irreversible NADPH-dependent deamination of GMP to IMP. It functions in the conversion of nucleobase, nucleoside and nucleotide derivatives of G to A nucleotides, and in maintaining the intracellular balance of A and G nucleotides. This Salmonella typhi protein is GMP reductase.